We begin with the raw amino-acid sequence, 90 residues long: Small ribosomal subunit protein uS15c (90 aa).

This sequence belongs to the universal ribosomal protein uS15 family. As to quaternary structure, part of the 30S ribosomal subunit.

The protein localises to the plastid. The protein resides in the chloroplast. This is Small ribosomal subunit protein uS15c (rps15) from Gossypium barbadense (Sea Island cotton).